A 510-amino-acid polypeptide reads, in one-letter code: Histidine ammonia-lyase (510 aa).

The segment at residues 143 to 145 (ASG) is a cross-link (5-imidazolinone (Ala-Gly)). Serine 144 carries the 2,3-didehydroalanine (Ser) modification.

It belongs to the PAL/histidase family. Contains an active site 4-methylidene-imidazol-5-one (MIO), which is formed autocatalytically by cyclization and dehydration of residues Ala-Ser-Gly.

It is found in the cytoplasm. The catalysed reaction is L-histidine = trans-urocanate + NH4(+). The protein operates within amino-acid degradation; L-histidine degradation into L-glutamate; N-formimidoyl-L-glutamate from L-histidine: step 1/3. This Yersinia pseudotuberculosis serotype I (strain IP32953) protein is Histidine ammonia-lyase.